The sequence spans 620 residues: Phosphopentomutase (620 aa).

2 residues coordinate alpha-D-glucose 1,6-bisphosphate: Arg71 and Ser173. The Phosphoserine intermediate role is filled by Ser173. Mg(2+)-binding residues include Ser173, Asp330, Asp332, and Asp334. Ser173 bears the Phosphoserine mark. Alpha-D-glucose 1,6-bisphosphate contacts are provided by Asp334, Arg335, Thr408, Glu432, and Lys446.

The protein belongs to the phosphohexose mutase family. As to quaternary structure, monomer. Mg(2+) serves as cofactor. Highly expressed in lung, spleen and thymus. Expressed at lower levels in liver, brain, kidney, skeletal muscle, testis and heart.

The protein resides in the cytoplasm. It localises to the cytosol. The catalysed reaction is alpha-D-ribose 1-phosphate = D-ribose 5-phosphate. It carries out the reaction 2-deoxy-alpha-D-ribose 1-phosphate = 2-deoxy-D-ribose 5-phosphate. It catalyses the reaction alpha-D-glucose 1-phosphate = alpha-D-glucose 6-phosphate. The enzyme catalyses O-phospho-L-seryl-[protein] + alpha-D-glucose 1-phosphate = alpha-D-glucose 1,6-bisphosphate + L-seryl-[protein]. The catalysed reaction is alpha-D-glucose 1,6-bisphosphate + L-seryl-[protein] = O-phospho-L-seryl-[protein] + alpha-D-glucose 6-phosphate. In terms of biological role, catalyzes the conversion of the nucleoside breakdown products ribose-1-phosphate and deoxyribose-1-phosphate to the corresponding 5-phosphopentoses. Catalyzes the reversible isomerization of alpha-D-glucose 1-phosphate to alpha-D-glucose 6-phosphate but with a lower catalytic efficiency. The mechanism proceeds via the intermediate compound alpha-D-glucose 1,6-bisphosphate. In vitro, also has a low glucose 1,6-bisphosphate synthase activity which is most probably not physiologically relevant. In Mus musculus (Mouse), this protein is Phosphopentomutase.